We begin with the raw amino-acid sequence, 127 residues long: Small ribosomal subunit protein bS6 (127 aa).

Residues 101 to 127 (PMMKEEKARDLLQGAKADAPAEQPAAA) are disordered. A compositionally biased stretch (low complexity) spans 115–127 (AKADAPAEQPAAA).

It belongs to the bacterial ribosomal protein bS6 family.

Functionally, binds together with bS18 to 16S ribosomal RNA. The sequence is that of Small ribosomal subunit protein bS6 from Thiobacillus denitrificans (strain ATCC 25259 / T1).